We begin with the raw amino-acid sequence, 317 residues long: Ferrochelatase (317 aa).

Fe cation contacts are provided by His192 and Glu271.

It belongs to the ferrochelatase family.

It is found in the cytoplasm. It carries out the reaction heme b + 2 H(+) = protoporphyrin IX + Fe(2+). Its pathway is porphyrin-containing compound metabolism; protoheme biosynthesis; protoheme from protoporphyrin-IX: step 1/1. Its function is as follows. Catalyzes the ferrous insertion into protoporphyrin IX. The polypeptide is Ferrochelatase (Geobacter metallireducens (strain ATCC 53774 / DSM 7210 / GS-15)).